The sequence spans 274 residues: 3',5'-cyclic adenosine monophosphate phosphodiesterase CpdA (274 aa).

Aspartate 21, histidine 23, aspartate 63, asparagine 93, histidine 163, histidine 202, and histidine 204 together coordinate Fe cation. AMP-binding positions include histidine 23, aspartate 63, and 93–94 (NH). Histidine 204 is a binding site for AMP.

This sequence belongs to the cyclic nucleotide phosphodiesterase class-III family. The cofactor is Fe(2+).

It carries out the reaction 3',5'-cyclic AMP + H2O = AMP + H(+). Hydrolyzes cAMP to 5'-AMP. Plays an important regulatory role in modulating the intracellular concentration of cAMP, thereby influencing cAMP-dependent processes. May coordinate responses to nutritional stress, ensuring optimal competence development. This is 3',5'-cyclic adenosine monophosphate phosphodiesterase CpdA from Haemophilus influenzae (strain ATCC 51907 / DSM 11121 / KW20 / Rd).